A 461-amino-acid polypeptide reads, in one-letter code: Spermidine coumaroyl-CoA acyltransferase (461 aa).

Catalysis depends on proton acceptor residues His168 and Asp393.

The protein belongs to the plant acyltransferase family. As to quaternary structure, monomer. Mainly expressed in roots at low levels, specifically, in the root tip.

The catalysed reaction is 2 (E)-4-coumaroyl-CoA + spermidine = N(1),N(8)-bis(coumaroyl)-spermidine + 2 CoA + 2 H(+). The protein operates within amine and polyamine metabolism; spermidine metabolism. Its function is as follows. Spermidine coumaroyl-CoA acyltransferase that mediates the conversion of spermidine into dicoumaroyl-spermidine. This chain is Spermidine coumaroyl-CoA acyltransferase, found in Arabidopsis thaliana (Mouse-ear cress).